The chain runs to 267 residues: Imidazole glycerol phosphate synthase subunit HisF (267 aa).

Active-site residues include aspartate 21 and aspartate 140.

Belongs to the HisA/HisF family. As to quaternary structure, heterodimer of HisH and HisF.

It is found in the cytoplasm. It catalyses the reaction 5-[(5-phospho-1-deoxy-D-ribulos-1-ylimino)methylamino]-1-(5-phospho-beta-D-ribosyl)imidazole-4-carboxamide + L-glutamine = D-erythro-1-(imidazol-4-yl)glycerol 3-phosphate + 5-amino-1-(5-phospho-beta-D-ribosyl)imidazole-4-carboxamide + L-glutamate + H(+). The protein operates within amino-acid biosynthesis; L-histidine biosynthesis; L-histidine from 5-phospho-alpha-D-ribose 1-diphosphate: step 5/9. Functionally, IGPS catalyzes the conversion of PRFAR and glutamine to IGP, AICAR and glutamate. The HisF subunit catalyzes the cyclization activity that produces IGP and AICAR from PRFAR using the ammonia provided by the HisH subunit. The polypeptide is Imidazole glycerol phosphate synthase subunit HisF (Bordetella avium (strain 197N)).